A 397-amino-acid chain; its full sequence is Elongation factor Tu-1 (397 aa).

Positions 10-206 constitute a tr-type G domain; sequence KPHVNIGTIG…AVDEAIPEPE (197 aa). The tract at residues 19–26 is G1; sequence GHIDHGKT. Position 19 to 26 (19 to 26) interacts with GTP; the sequence is GHIDHGKT. Mg(2+) is bound at residue Thr-26. The tract at residues 62–66 is G2; it reads GITIS. Residues 83 to 86 are G3; it reads DCPG. GTP is bound by residues 83–87 and 138–141; these read DCPGH and NKAD. Positions 138-141 are G4; the sequence is NKAD. The G5 stretch occupies residues 176–178; it reads SAL.

It belongs to the TRAFAC class translation factor GTPase superfamily. Classic translation factor GTPase family. EF-Tu/EF-1A subfamily. In terms of assembly, monomer.

The protein resides in the cytoplasm. It carries out the reaction GTP + H2O = GDP + phosphate + H(+). Functionally, GTP hydrolase that promotes the GTP-dependent binding of aminoacyl-tRNA to the A-site of ribosomes during protein biosynthesis. This chain is Elongation factor Tu-1, found in Streptomyces coelicolor (strain ATCC BAA-471 / A3(2) / M145).